A 329-amino-acid chain; its full sequence is Ribosomal protein L11 methyltransferase (329 aa).

S-adenosyl-L-methionine is bound by residues T177, G198, D220, and N264.

Belongs to the methyltransferase superfamily. PrmA family.

The protein resides in the cytoplasm. The enzyme catalyses L-lysyl-[protein] + 3 S-adenosyl-L-methionine = N(6),N(6),N(6)-trimethyl-L-lysyl-[protein] + 3 S-adenosyl-L-homocysteine + 3 H(+). In terms of biological role, methylates ribosomal protein L11. This is Ribosomal protein L11 methyltransferase from Helicobacter pylori (strain Shi470).